The chain runs to 799 residues: Transcriptional activator FLO8 (799 aa).

Residues 1-10 (MSYKVNSSYP) are compositionally biased toward polar residues. Disordered regions lie at residues 1-20 (MSYK…EQPY), 37-68 (TNSE…SDLK), 101-127 (AHLD…QNTF), 255-406 (TTGA…RVNK), 431-503 (NSKS…SVIL), 568-622 (ESGK…PHGF), 644-691 (VSQE…YDFD), and 705-758 (AYAS…NENQ). Low complexity predominate over residues 41–55 (QQRQQQQQQQQQQQQ). Positions 73–105 (CKNTLNEYIFDFLTKSSLKNTAAAFAQDAHLDR) constitute a LisH domain. A compositionally biased stretch (polar residues) spans 270–285 (DFTNVGPTQNRSQNVT). A compositionally biased stretch (low complexity) spans 307 to 317 (NNNTTNNTTNN). Residues 318–340 (KSPVNQPKSLKTMHSTDKPNNVP) are compositionally biased toward polar residues. Positions 341–353 (TSKSTRSRSATSK) are enriched in low complexity. The span at 354–370 (AKGKVKAGLVAKRRRKN) shows a compositional bias: basic residues. Polar residues-rich tracts occupy residues 371–396 (NTAT…TTSE) and 460–480 (KAST…NSVV). A compositionally biased stretch (basic residues) spans 482–497 (GKKRSPPNTRVSRRKS). Composition is skewed to polar residues over residues 584 to 593 (SKVSASSPLS) and 660 to 675 (GNDS…TLST).

The protein belongs to the FLO8 family.

It is found in the nucleus. Functionally, required for diploid filamentous growth, haploid invasive growth and flocculation. Putative transcriptional activator of FLO1. The sequence is that of Transcriptional activator FLO8 (FLO8) from Saccharomyces cerevisiae (strain ATCC 204508 / S288c) (Baker's yeast).